The following is a 601-amino-acid chain: Elongation factor 4 (601 aa).

One can recognise a tr-type G domain in the interval 5 to 187 (SNIRNFAIIA…AIVTKLPSPN (183 aa)). Residues 17–22 (DHGKST) and 134–137 (NKID) each bind GTP.

It belongs to the TRAFAC class translation factor GTPase superfamily. Classic translation factor GTPase family. LepA subfamily.

The protein resides in the cell inner membrane. It catalyses the reaction GTP + H2O = GDP + phosphate + H(+). Required for accurate and efficient protein synthesis under certain stress conditions. May act as a fidelity factor of the translation reaction, by catalyzing a one-codon backward translocation of tRNAs on improperly translocated ribosomes. Back-translocation proceeds from a post-translocation (POST) complex to a pre-translocation (PRE) complex, thus giving elongation factor G a second chance to translocate the tRNAs correctly. Binds to ribosomes in a GTP-dependent manner. This chain is Elongation factor 4, found in Orientia tsutsugamushi (strain Ikeda) (Rickettsia tsutsugamushi).